Here is a 452-residue protein sequence, read N- to C-terminus: Ethanolamine kinase 1 (452 aa).

Positions 26-64 are disordered; sequence AVQTRIGNSAASRRSPAARPPVPAPPALPRGRPGTEGST. Positions 43 to 53 are enriched in pro residues; it reads ARPPVPAPPAL.

This sequence belongs to the choline/ethanolamine kinase family. Expressed in kidney, liver, placenta, heart, leukocyte, ovary and testis.

It is found in the cytoplasm. It carries out the reaction ethanolamine + ATP = phosphoethanolamine + ADP + H(+). It functions in the pathway phospholipid metabolism; phosphatidylethanolamine biosynthesis; phosphatidylethanolamine from ethanolamine: step 1/3. In terms of biological role, highly specific for ethanolamine phosphorylation. May be a rate-controlling step in phosphatidylethanolamine biosynthesis. This chain is Ethanolamine kinase 1, found in Homo sapiens (Human).